An 893-amino-acid polypeptide reads, in one-letter code: Flippase kinase 1 (893 aa).

Residues 1 to 23 (MAGHHHEHEQERDHEQEHEHDSL) are compositionally biased toward basic and acidic residues. 3 disordered regions span residues 1–124 (MAGH…SSKL), 129–148 (PMTSVANASPASPPLSPTIP), and 163–243 (QHEH…ERAG). Residues 24–42 (QRPTTGSERTRSISFSKLL) are compositionally biased toward polar residues. Positions 49 to 62 (NASSSNNMSVSSVN) are enriched in low complexity. Positions 76 to 87 (NNSGSEGQSSRF) are enriched in polar residues. A compositionally biased stretch (low complexity) spans 96 to 122 (SGNSSKNASAHNSSQSSLEGDSASSSS). Phosphoserine occurs at positions 140, 144, 171, 175, and 185. Residues 206–216 (SQNSNNSSSTS) show a composition bias toward low complexity. A compositionally biased stretch (polar residues) spans 228–237 (GSQGFSSNNP). Ser-300 is modified (phosphoserine). Positions 334–355 (DTLNGSPSRGSSKSPTITQTFP) are enriched in polar residues. The disordered stretch occupies residues 334-480 (DTLNGSPSRG…PRRSRRLRTK (147 aa)). Basic and acidic residues predominate over residues 370-380 (NNDKHDEKEEQ). Over residues 381–399 (QTTTDNKTRNLSPTKQNGK) the composition is skewed to polar residues. Ser-414 carries the phosphoserine modification. Positions 422-439 (ASATSPTSSSARKTSGSS) are enriched in low complexity. Ser-462 is subject to Phosphoserine. The 282-residue stretch at 496-777 (FEKIRLLGQG…AADVKKHPFF (282 aa)) folds into the Protein kinase domain. ATP is bound by residues 502–510 (LGQGDVGKV) and Lys-525. Asp-621 functions as the Proton acceptor in the catalytic mechanism. One can recognise an AGC-kinase C-terminal domain in the interval 778 to 861 (KKVQWSLLRN…MSLMEQDNNS (84 aa)). A disordered region spans residues 874–893 (AYTPNSNRSRSNSHRTFFKR). The segment covering 884–893 (SNSHRTFFKR) has biased composition (basic residues).

This sequence belongs to the protein kinase superfamily. Ser/Thr protein kinase family. KIN82 subfamily. Post-translationally, the N-terminal non-catalytic domain is phosphorylated by YPK1.

The protein localises to the cytoplasm. Its subcellular location is the cell membrane. The enzyme catalyses L-seryl-[protein] + ATP = O-phospho-L-seryl-[protein] + ADP + H(+). The catalysed reaction is L-threonyl-[protein] + ATP = O-phospho-L-threonyl-[protein] + ADP + H(+). Its activity is regulated as follows. Down-regulated by YKP1 phosphorylation. This effect is counteracted in the presence of mannosyl-inositolphosphorylceramide (MIPC). In terms of biological role, flippase activator that phosphorylates DNF1 and DNF2 and which is involved in the generation of phospholipid asymmetry in membranes by the inward translocation of phospholipids and in the retrieval pathway from early endosomes to the trans-Golgi network (TGN). Also phosphorylates the N-terminal half of YPK1. Involved in pheromone-response. The sequence is that of Flippase kinase 1 (FPK1) from Saccharomyces cerevisiae (strain ATCC 204508 / S288c) (Baker's yeast).